The chain runs to 616 residues: Matrix metalloproteinase-21 (616 aa).

The signal sequence occupies residues 1-22 (MPTAPALGALLLLLGALTPGHQ). Positions 23–192 (EKLFHSRDHS…TSTSKIRKKR (170 aa)) are excised as a propeptide. Residues 139–146 (PRCGVPDN) carry the Cysteine switch motif. Residue cysteine 141 participates in Zn(2+) binding. Residues 157-186 (SNSNNVTEKASGKSLNTTTNQNPENGTSTS) form a disordered region. 3 N-linked (GlcNAc...) asparagine glycosylation sites follow: asparagine 161, asparagine 172, and asparagine 181. Histidine 329 provides a ligand contact to Zn(2+). Glutamate 330 is an active-site residue. 2 residues coordinate Zn(2+): histidine 333 and histidine 339. Cysteine 375 and cysteine 606 are disulfide-bonded. Hemopexin repeat units follow at residues 376–435 (EGSF…WHGI), 437–493 (AEGI…FPKI), 494–542 (PSPI…FPAV), and 549–605 (FGNI…WTDI). Asparagine 418 is a glycosylation site (N-linked (GlcNAc...) asparagine). Asparagine 597 carries N-linked (GlcNAc...) asparagine glycosylation.

This sequence belongs to the peptidase M10A family. Zn(2+) serves as cofactor. The cofactor is Ca(2+). In terms of processing, the precursor is cleaved by a furin endopeptidase.

Its subcellular location is the secreted. May play a role in gastrulation-related cell movement. Plays a specialized role in the generation of left-right asymmetry during embryogenesis. May act as a negative regulator of the NOTCH-signaling pathway. The polypeptide is Matrix metalloproteinase-21 (MMP21) (Cynops pyrrhogaster (Japanese fire-bellied newt)).